We begin with the raw amino-acid sequence, 400 residues long: Argininosuccinate synthase (400 aa).

ATP contacts are provided by residues 6-14 (AYSGGLDTS) and Ala33. 2 residues coordinate L-citrulline: Tyr84 and Ser89. An ATP-binding site is contributed by Gly114. Residues Thr116, Asn120, and Asp121 each contribute to the L-aspartate site. Residue Asn120 participates in L-citrulline binding. Arg124, Ser173, Ser182, Glu258, and Tyr270 together coordinate L-citrulline.

Belongs to the argininosuccinate synthase family. Type 1 subfamily. Homotetramer.

The protein resides in the cytoplasm. It carries out the reaction L-citrulline + L-aspartate + ATP = 2-(N(omega)-L-arginino)succinate + AMP + diphosphate + H(+). The protein operates within amino-acid biosynthesis; L-arginine biosynthesis; L-arginine from L-ornithine and carbamoyl phosphate: step 2/3. The sequence is that of Argininosuccinate synthase from Thermus thermophilus (strain ATCC BAA-163 / DSM 7039 / HB27).